Consider the following 836-residue polypeptide: Hypoxia-inducible factor 1-alpha (836 aa).

Residues 1-30 form a disordered region; that stretch reads MEGAGGENEKKKMSSERRKEKSRDAARSRR. The segment at 1–401 is interaction with TSGA10; that stretch reads MEGAGGENEK…KEPDALTLLA (401 aa). The segment covering 7 to 30 has biased composition (basic and acidic residues); that stretch reads ENEKKKMSSERRKEKSRDAARSRR. The bHLH domain maps to 17–70; the sequence is RRKEKSRDAARSRRSKESEVFYELAHQLPLPHNVSSHLDKASVMRLTISYLRVR. The tract at residues 21–30 is DNA-binding; it reads KSRDAARSRR. In terms of domain architecture, PAS 1 spans 80–155; the sequence is SEDEMKAQMD…EMLTHRNGPV (76 aa). Residues 170–191 are required for heterodimer formation with ARNT; the sequence is RMKCTLTSRGRTMNIKSATWKV. In terms of domain architecture, PAS 2 spans 228-298; it reads PHPSNIEIPL…KTHHDMFTKG (71 aa). Residue Ser-247 is modified to Phosphoserine; by CK1. The region spanning 302 to 345 is the PAC domain; that stretch reads TGQYRMLAKRGGYVWVETQATVIYNTKNSQPQCIVCVNYVVSGI. The N-terminal VHL recognition site stretch occupies residues 380 to 417; that stretch reads SEDTSCLFDKLKKEPDALTLLAPAAGDTIISLDFGSDD. Lys-391 participates in a covalent cross-link: Glycyl lysine isopeptide (Lys-Gly) (interchain with G-Cter in SUMO). The tract at residues 401–613 is ODD; the sequence is APAAGDTIIS…PSMSTVTGFQ (213 aa). Position 402 is a 4-hydroxyproline (Pro-402). A Glycyl lysine isopeptide (Lys-Gly) (interchain with G-Cter in SUMO) cross-link involves residue Lys-476. Positions 492 to 511 are disordered; sequence QIQDQPASPSDGSTRQSSPE. Residues 544–588 are NTAD; that stretch reads FKLELVEKLFAEDTEAKNPFSTQDTDLDLEMLAPYIPMDDDFQLR. Lys-545 is subject to N6-acetyllysine; alternate. Residues Lys-545, Lys-551, and Lys-560 each participate in a glycyl lysine isopeptide (Lys-Gly) (interchain with G-Cter in ubiquitin) cross-link. Lys-545 is covalently cross-linked (Glycyl lysine isopeptide (Lys-Gly) (interchain with G-Cter in ubiquitin); alternate). Phosphoserine; by GSK3-beta is present on Ser-564. Thr-568 is subject to Phosphothreonine; by GSK3-beta. The interval 569-585 is C-terminal VHL recognition site; the sequence is DLDLEMLAPYIPMDDDF. A 4-hydroxyproline modification is found at Pro-577. Ser-589 is modified (phosphoserine; by PLK3). The segment at 589-795 is ID; the sequence is SFDQLSPLES…SDLACRLLGQ (207 aa). Disordered stretches follow at residues 593-684 and 707-734; these read LSPL…DRAG and QRNT…KMEH. A Phosphoserine; by GSK3-beta modification is found at Ser-602. The segment covering 608–620 has biased composition (polar residues); sequence TVTGFQQTQLQKP. Low complexity predominate over residues 621-632; the sequence is TITATATTTATT. The segment covering 633-647 has biased composition (basic and acidic residues); that stretch reads DESKTETKDNKEDIK. Polar residues predominate over residues 652-678; the sequence is SPSSTQVPQETTTAKASAYSGTHSRTA. At Ser-668 the chain carries Phosphoserine; by PLK3. An N6-acetyllysine modification is found at Lys-719. The Nuclear localization signal motif lies at 728-731; that stretch reads RKRK. Residues 796–836 form a CTAD region; that stretch reads SMDESGLPQLTSYDCEVNAPIQGSRNLLQGEELLRALDQVN. The residue at position 810 (Cys-810) is an S-nitrosocysteine. The residue at position 813 (Asn-813) is a (3S)-3-hydroxyasparagine.

As to quaternary structure, interacts with the ARNT; forms a heterodimer that binds core DNA sequence 5'-TACGTG-3' within the hypoxia response element (HRE) of target gene promoters. Interacts with COPS5; the interaction increases the transcriptional activity of HIF1A through increased stability. Interacts with EP300 (via TAZ-type 1 domains); the interaction is stimulated in response to hypoxia and inhibited by CITED2. Interacts with CREBBP (via TAZ-type 1 domains). Interacts with NCOA1, NCOA2, APEX1 and HSP90. Interacts (hydroxylated within the ODD domain) with VHLL (via beta domain); the interaction, leads to polyubiquitination and subsequent HIF1A proteasomal degradation. During hypoxia, sumoylated HIF1A also binds VHL; the interaction promotes the ubiquitination of HIF1A. Interacts with SENP1; the interaction desumoylates HIF1A resulting in stabilization and activation of transcription. Interacts (via the ODD domain) with NAA10; the interaction appears not to acetylate HIF1A nor have any affect on protein stability, during hypoxia. Interacts with RWDD3; the interaction enhances HIF1A sumoylation. Interacts with TSGA10. Interacts with HIF3A. Interacts with RORA (via the DNA binding domain); the interaction enhances HIF1A transcription under hypoxia through increasing protein stability. Interaction with PSMA7 inhibits the transactivation activity of HIF1A under both normoxic and hypoxia-mimicking conditions. Interacts with USP20. Interacts with RACK1; promotes HIF1A ubiquitination and proteasome-mediated degradation. Interacts (via N-terminus) with USP19. Interacts with SIRT2. Interacts (deacetylated form) with EGLN1. Interacts with CBFA2T3. Interacts with HSP90AA1 and HSP90AB1. Interacts with DCUN1D1; this interaction increases the interaction between VHL and DCUN1D1. Interacts with HIF1AN. In terms of processing, S-nitrosylation of Cys-810 may be responsible for increased recruitment of p300 coactivator necessary for transcriptional activity of HIF-1 complex. Post-translationally, requires phosphorylation for DNA-binding. Phosphorylation at Ser-247 by CSNK1D/CK1 represses kinase activity and impairs ARNT binding. Phosphorylation by GSK3-beta and PLK3 promote degradation by the proteasome. Sumoylated; with SUMO1 under hypoxia. Sumoylation is enhanced through interaction with RWDD3. Both sumoylation and desumoylation seem to be involved in the regulation of its stability during hypoxia. Sumoylation can promote either its stabilization or its VHL-dependent degradation by promoting hydroxyproline-independent HIF1A-VHL complex binding, thus leading to HIF1A ubiquitination and proteasomal degradation. Desumoylation by SENP1 increases its stability amd transcriptional activity. There is a disaccord between various publications on the effect of sumoylation and desumoylation on its stability and transcriptional activity. In terms of processing, acetylation of Lys-545 by ARD1 increases interaction with VHL and stimulates subsequent proteasomal degradation. Deacetylation of Lys-719 by SIRT2 increases its interaction with and hydroxylation by EGLN1 thereby inactivating HIF1A activity by inducing its proteasomal degradation. Post-translationally, ubiquitinated; in normoxia, following hydroxylation and interaction with VHL. Lys-545 appears to be the principal site of ubiquitination. Clioquinol, the Cu/Zn-chelator, inhibits ubiquitination through preventing hydroxylation at Asn-813. Ubiquitinated by E3 ligase VHL. Deubiquitinated by UCHL1. The iron and 2-oxoglutarate dependent 3-hydroxylation of asparagine is (S) stereospecific within HIF CTAD domains. In terms of processing, in normoxia, is hydroxylated on Pro-402 and Pro-577 in the oxygen-dependent degradation domain (ODD) by EGLN1/PHD2 and EGLN2/PHD1. EGLN3/PHD3 has also been shown to hydroxylate Pro-577. The hydroxylated prolines promote interaction with VHL, initiating rapid ubiquitination and subsequent proteasomal degradation. Deubiquitinated by USP20. Under hypoxia, proline hydroxylation is impaired and ubiquitination is attenuated, resulting in stabilization. In normoxia, is hydroxylated on Asn-813 by HIF1AN, thus abrogating interaction with CREBBP and EP300 and preventing transcriptional activation. Repressed by iron ion, via Fe(2+) prolyl hydroxylase (PHD) enzymes-mediated hydroxylation and subsequent proteasomal degradation. Ubiquitous.

The protein localises to the cytoplasm. It is found in the nucleus. It localises to the nucleus speckle. Its activity is regulated as follows. Induced by reactive oxygen species (ROS). Functions as a master transcriptional regulator of the adaptive response to hypoxia. Under hypoxic conditions, activates the transcription of over 40 genes, including erythropoietin, glucose transporters, glycolytic enzymes, vascular endothelial growth factor, HILPDA, and other genes whose protein products increase oxygen delivery or facilitate metabolic adaptation to hypoxia. Plays an essential role in embryonic vascularization, tumor angiogenesis and pathophysiology of ischemic disease. Heterodimerizes with ARNT; heterodimer binds to core DNA sequence 5'-TACGTG-3' within the hypoxia response element (HRE) of target gene promoters. Activation requires recruitment of transcriptional coactivators such as CREBBP and EP300. Activity is enhanced by interaction with NCOA1 and/or NCOA2. Interaction with redox regulatory protein APEX1 seems to activate CTAD and potentiates activation by NCOA1 and CREBBP. Involved in the axonal distribution and transport of mitochondria in neurons during hypoxia. The polypeptide is Hypoxia-inducible factor 1-alpha (Hif1a) (Mus musculus (Mouse)).